Reading from the N-terminus, the 55-residue chain is Serine protease inhibitor Kazal-type 1 (55 aa).

The Kazal-like domain maps to 2-55 (QGRDANCNYEFPGCPRNLEPVCGTDGNTYNNECLLCMENKKRDVPIRIQKDGPC). Disulfide bonds link cysteine 8/cysteine 37, cysteine 15/cysteine 34, and cysteine 23/cysteine 55.

The protein resides in the secreted. Its function is as follows. Serine protease inhibitor which exhibits anti-trypsin activity. In the pancreas, protects against trypsin-catalyzed premature activation of zymogens. In terms of biological role, in the male reproductive tract, binds to sperm heads where it modulates sperm capacitance by inhibiting calcium uptake and nitrogen oxide (NO) production. This Monodelphis domestica (Gray short-tailed opossum) protein is Serine protease inhibitor Kazal-type 1 (SPINK1).